We begin with the raw amino-acid sequence, 215 residues long: ATP-dependent dethiobiotin synthetase BioD (215 aa).

13–18 (DIGKTV) serves as a coordination point for ATP. Threonine 17 serves as a coordination point for Mg(2+). Residue lysine 38 is part of the active site. Threonine 42 serves as a coordination point for substrate. Residues aspartate 50, 115-118 (EGAG), and 175-176 (NH) each bind ATP. The Mg(2+) site is built by aspartate 50 and glutamate 115.

Belongs to the dethiobiotin synthetase family. Homodimer. The cofactor is Mg(2+).

Its subcellular location is the cytoplasm. The enzyme catalyses (7R,8S)-7,8-diammoniononanoate + CO2 + ATP = (4R,5S)-dethiobiotin + ADP + phosphate + 3 H(+). The protein operates within cofactor biosynthesis; biotin biosynthesis; biotin from 7,8-diaminononanoate: step 1/2. Its function is as follows. Catalyzes a mechanistically unusual reaction, the ATP-dependent insertion of CO2 between the N7 and N8 nitrogen atoms of 7,8-diaminopelargonic acid (DAPA, also called 7,8-diammoniononanoate) to form a ureido ring. This Neisseria meningitidis serogroup C / serotype 2a (strain ATCC 700532 / DSM 15464 / FAM18) protein is ATP-dependent dethiobiotin synthetase BioD.